Here is an 898-residue protein sequence, read N- to C-terminus: DNA damage-induced apoptosis suppressor protein (898 aa).

Disordered regions lie at residues 191–210, 643–670, and 710–749; these read CGSQEHSSQSLTSDDSDSDL, SINTSKEMPYRPSNNNLTPSSSGDHEGS, and YPINENRGQPSQKPSLQSISPSRYSRPRSQSDSECDFEES. 2 stretches are compositionally biased toward polar residues: residues 643 to 664 and 710 to 725; these read SINTSKEMPYRPSNNNLTPSSS and YPINENRGQPSQKPSL. A compositionally biased stretch (low complexity) spans 726–741; sequence QSISPSRYSRPRSQSD.

In terms of tissue distribution, highly expressed in the testis, spleen and heart. Expressed at high levels in the primary spermatocytes and to a lesser extent in the round spermatids. Also found in the bone marrow, brain, lung, kidney and liver.

The protein resides in the cytoplasm. It localises to the nucleus. Its function is as follows. May be an anti-apoptotic protein involved in DNA repair or cell survival. This chain is DNA damage-induced apoptosis suppressor protein (Ddias), found in Mus musculus (Mouse).